Reading from the N-terminus, the 537-residue chain is Oocyte zinc finger protein XlCOF29 (537 aa).

Positions 1 to 21 (MGMSEKASDTGMKGKKKDKNE) are disordered. 6 consecutive C2H2-type zinc fingers follow at residues 375-397 (FTCS…LKSH), 403-425 (FSCS…RRLH), 431-453 (FPCA…SKTH), 459-481 (YSCT…KKRH), 487-509 (YTCS…VRIH), and 515-537 (FSCS…ERMH).

It belongs to the krueppel C2H2-type zinc-finger protein family.

It localises to the nucleus. Its function is as follows. May be involved in transcriptional regulation. The protein is Oocyte zinc finger protein XlCOF29 of Xenopus laevis (African clawed frog).